Consider the following 180-residue polypeptide: Dual-action ribosomal maturation protein DarP (180 aa).

Basic and acidic residues predominate over residues 1–13; that stretch reads MKPDKTENTEHGI. The tract at residues 1–21 is disordered; it reads MKPDKTENTEHGIEPVSKTKR.

This sequence belongs to the DarP family.

The protein resides in the cytoplasm. In terms of biological role, member of a network of 50S ribosomal subunit biogenesis factors which assembles along the 30S-50S interface, preventing incorrect 23S rRNA structures from forming. Promotes peptidyl transferase center (PTC) maturation. This is Dual-action ribosomal maturation protein DarP from Methylobacillus flagellatus (strain ATCC 51484 / DSM 6875 / VKM B-1610 / KT).